A 346-amino-acid polypeptide reads, in one-letter code: MDNVIGLEIIEVVEQAAIASALWMGKGEKDTADAVAVDAMRNRMNQIHMRGRIVIGEGERDDAPMLYIGEQVGICTQENAAEFCTLDELIEIDIAVDPCEGTNLVAYGQNGSMAVLAISEKGGLFAAPDFYMKKLAAPPAAKGKVDIRKSATENLQIIAECLDRSISELVVVVMKRARHDGLIKEIREAGARVRLIEDGDVSAALSCAFSGTNIHALMGIGAAPEGVISAAAMRALGGHFQGQLIYDPEIVQTGLIGESKESNLARLKEMGIDDPDRIYEAEELACGETVLFAACGITPGTLMKGARFFPGGVRTESLIISTQSKTVRFVDTIHKLDDKHRALQLH.

Asp33, Glu57, Asp97, and Glu100 together coordinate Mn(2+). Substrate is bound by residues 100-102 (EGT), Tyr131, 176-178 (RAR), and 198-200 (DGD). Glu225 is a binding site for Mn(2+).

This sequence belongs to the FBPase class 2 family. As to quaternary structure, homotetramer. Requires Mn(2+) as cofactor.

It carries out the reaction beta-D-fructose 1,6-bisphosphate + H2O = beta-D-fructose 6-phosphate + phosphate. It catalyses the reaction D-sedoheptulose 1,7-bisphosphate + H2O = D-sedoheptulose 7-phosphate + phosphate. The protein operates within carbohydrate biosynthesis; Calvin cycle. Its function is as follows. Catalyzes the hydrolysis of fructose 1,6-bisphosphate (Fru 1,6-P2) and sedoheptulose 1,7-bisphosphate (Sed 1,7-P2) to fructose 6-phosphate and sedoheptulose 7-phosphate, respectively. The chain is D-fructose 1,6-bisphosphatase class 2/sedoheptulose 1,7-bisphosphatase 1 from Acaryochloris marina (strain MBIC 11017).